We begin with the raw amino-acid sequence, 124 residues long: MPKEQKEVRDLQEGNYVMIEDVPSKITSYSTSKPGKHGSAKARVEGTGVFDGQKRNFTQPVDAKVWVPIVNRKQGQVVSVSGDDMQVMDLETYETITMRIPEDLAPESDDEIEYLEFEGQRKVV.

The interval 27–53 is disordered; it reads TSYSTSKPGKHGSAKARVEGTGVFDGQ. Lys36 carries the post-translational modification Hypusine.

Belongs to the eIF-5A family.

It is found in the cytoplasm. Functions by promoting the formation of the first peptide bond. This chain is Translation initiation factor 5A, found in Natronomonas pharaonis (strain ATCC 35678 / DSM 2160 / CIP 103997 / JCM 8858 / NBRC 14720 / NCIMB 2260 / Gabara) (Halobacterium pharaonis).